Here is a 389-residue protein sequence, read N- to C-terminus: 26S proteasome non-ATPase regulatory subunit 6 (389 aa).

Residues 193–361 (DFKQAAELFL…EIVETNRPDS (169 aa)) form the PCI domain.

Belongs to the proteasome subunit S10 family. Component of the 19S proteasome regulatory particle complex. The 26S proteasome consists of a 20S core particle (CP) and two 19S regulatory subunits (RP). The regulatory particle is made of a lid composed of 9 subunits including PSMD6, a base containing 6 ATPases and few additional components.

Component of the 26S proteasome, a multiprotein complex involved in the ATP-dependent degradation of ubiquitinated proteins. This complex plays a key role in the maintenance of protein homeostasis by removing misfolded or damaged proteins, which could impair cellular functions, and by removing proteins whose functions are no longer required. Therefore, the proteasome participates in numerous cellular processes, including cell cycle progression, apoptosis, or DNA damage repair. This chain is 26S proteasome non-ATPase regulatory subunit 6 (PSMD6), found in Homo sapiens (Human).